Consider the following 145-residue polypeptide: Ribonuclease VapC48 (145 aa).

Mg(2+)-binding residues include Asp6 and Asp109. The region spanning His15 to Asp141 is the PINc domain.

This sequence belongs to the PINc/VapC protein family. It depends on Mg(2+) as a cofactor.

Its function is as follows. Toxic component of a type II toxin-antitoxin (TA) system. An RNase. Its cognate antitoxin is VapB48. The polypeptide is Ribonuclease VapC48 (Mycobacterium tuberculosis (strain CDC 1551 / Oshkosh)).